The primary structure comprises 410 residues: Elongation factor Tu (410 aa).

Residues 10 to 214 (KPHVNIGTIG…EVDAYIPTPE (205 aa)) form the tr-type G domain. The tract at residues 19 to 26 (GHVDHGKT) is G1. 19-26 (GHVDHGKT) contributes to the GTP binding site. Thr26 lines the Mg(2+) pocket. A G2 region spans residues 60–64 (GITIN). The tract at residues 81–84 (DCPG) is G3. GTP is bound by residues 81-85 (DCPGH) and 136-139 (NKED). Residues 136-139 (NKED) are G4. Residues 174-176 (SAL) are G5.

The protein belongs to the TRAFAC class translation factor GTPase superfamily. Classic translation factor GTPase family. EF-Tu/EF-1A subfamily. Monomer.

It localises to the cytoplasm. The enzyme catalyses GTP + H2O = GDP + phosphate + H(+). Its function is as follows. GTP hydrolase that promotes the GTP-dependent binding of aminoacyl-tRNA to the A-site of ribosomes during protein biosynthesis. This chain is Elongation factor Tu, found in Gloeothece citriformis (strain PCC 7424) (Cyanothece sp. (strain PCC 7424)).